The chain runs to 91 residues: Small ribosomal subunit protein bS18 (91 aa).

Belongs to the bacterial ribosomal protein bS18 family. As to quaternary structure, part of the 30S ribosomal subunit. Forms a tight heterodimer with protein bS6.

Functionally, binds as a heterodimer with protein bS6 to the central domain of the 16S rRNA, where it helps stabilize the platform of the 30S subunit. This Paraburkholderia phytofirmans (strain DSM 17436 / LMG 22146 / PsJN) (Burkholderia phytofirmans) protein is Small ribosomal subunit protein bS18.